A 242-amino-acid polypeptide reads, in one-letter code: Carboxy-S-adenosyl-L-methionine synthase (242 aa).

Residues Tyr-39, 64–66, 89–90, 117–118, Asn-132, and Arg-199 contribute to the S-adenosyl-L-methionine site; these read GCS, DN, and DI.

Belongs to the class I-like SAM-binding methyltransferase superfamily. Cx-SAM synthase family. In terms of assembly, homodimer.

The enzyme catalyses prephenate + S-adenosyl-L-methionine = carboxy-S-adenosyl-L-methionine + 3-phenylpyruvate + H2O. Catalyzes the conversion of S-adenosyl-L-methionine (SAM) to carboxy-S-adenosyl-L-methionine (Cx-SAM). The protein is Carboxy-S-adenosyl-L-methionine synthase of Aliivibrio fischeri (strain MJ11) (Vibrio fischeri).